A 122-amino-acid polypeptide reads, in one-letter code: Phycocyanin PC645 alpha-2 subunit (122 aa).

(2R,3E)-phycocyanobilin is bound by residues D54 and R68. Residues C70, K76, E77, and C92 each contribute to the mesobiliverdin site.

It belongs to the phycoerythrin family. Heterotetramer of 2 different alpha chains and 2 identical beta chains which form 2 alpha-beta heterodimers within the heterotetramer. Contains two phycocyanobilin chromophores and one mesobiliverdin chromophore with binding mediated by both the alpha and beta subunits.

The protein localises to the plastid. Its subcellular location is the chloroplast thylakoid membrane. Functionally, light-harvesting photosynthetic tetrapyrrole chromophore-protein from the phycobiliprotein complex. This chain is Phycocyanin PC645 alpha-2 subunit, found in Chroomonas sp. (strain CCMP270).